A 637-amino-acid chain; its full sequence is Cell division cycle-related protein res1/sct1 (637 aa).

In terms of domain architecture, HTH APSES-type spans 6–112 (IHKITYSGVE…YSGSAFMPMS (107 aa)). Positions 37–58 (ATQILKIAELDKPRRTRILEKF) form a DNA-binding region, H-T-H motif. The tract at residues 114 to 137 (FTPQSNRKPTEAYRRNSPVKKSFS) is disordered. 2 ANK repeats span residues 236 to 265 (DGHTALHWAAAMGNLEMMHALLQAGANVVA) and 357 to 386 (HGDTALLICARNGAKKCARLLLSFYASSSI).

DSC1 contains cdc10 and sct1/res1.

In terms of biological role, acts as a positive regulator of the mitotic cell cycle and as a negative regulator of sexual differentiation. May be involved in the transcriptional regulation of the cdc22 and cdt1 genes. Is an integral component of the DSC1-like complex. The chain is Cell division cycle-related protein res1/sct1 (res1) from Schizosaccharomyces pombe (strain 972 / ATCC 24843) (Fission yeast).